Reading from the N-terminus, the 458-residue chain is tRNA(Ile)-lysidine synthase (458 aa).

Residue 35-40 (SGGVDS) participates in ATP binding.

Belongs to the tRNA(Ile)-lysidine synthase family.

The protein localises to the cytoplasm. It catalyses the reaction cytidine(34) in tRNA(Ile2) + L-lysine + ATP = lysidine(34) in tRNA(Ile2) + AMP + diphosphate + H(+). Functionally, ligates lysine onto the cytidine present at position 34 of the AUA codon-specific tRNA(Ile) that contains the anticodon CAU, in an ATP-dependent manner. Cytidine is converted to lysidine, thus changing the amino acid specificity of the tRNA from methionine to isoleucine. The chain is tRNA(Ile)-lysidine synthase from Nitrosomonas europaea (strain ATCC 19718 / CIP 103999 / KCTC 2705 / NBRC 14298).